The chain runs to 234 residues: UPF0502 protein Reut_B4455 (234 aa).

This sequence belongs to the UPF0502 family.

This is UPF0502 protein Reut_B4455 from Cupriavidus pinatubonensis (strain JMP 134 / LMG 1197) (Cupriavidus necator (strain JMP 134)).